A 176-amino-acid polypeptide reads, in one-letter code: Large ribosomal subunit protein uL16 (176 aa).

Belongs to the universal ribosomal protein uL16 family.

This is Large ribosomal subunit protein uL16 from Sulfolobus acidocaldarius (strain ATCC 33909 / DSM 639 / JCM 8929 / NBRC 15157 / NCIMB 11770).